The chain runs to 96 residues: uncharacterized protein (96 aa).

A signal peptide spans 1–23 (MKQFYSVVLTIIIYISSQSNVVS). Intrachain disulfides connect C60–C74, C67–C78, and C73–C83.

It is found in the secreted. This is an uncharacterized protein from Schistosoma japonicum (Blood fluke).